We begin with the raw amino-acid sequence, 318 residues long: Acetyl-coenzyme A carboxylase carboxyl transferase subunit alpha (318 aa).

The CoA carboxyltransferase C-terminal domain maps to 38-292 (ALDRKAEEML…GEAIAAMLGE (255 aa)).

It belongs to the AccA family. As to quaternary structure, acetyl-CoA carboxylase is a heterohexamer composed of biotin carboxyl carrier protein (AccB), biotin carboxylase (AccC) and two subunits each of ACCase subunit alpha (AccA) and ACCase subunit beta (AccD).

The protein localises to the cytoplasm. The enzyme catalyses N(6)-carboxybiotinyl-L-lysyl-[protein] + acetyl-CoA = N(6)-biotinyl-L-lysyl-[protein] + malonyl-CoA. Its pathway is lipid metabolism; malonyl-CoA biosynthesis; malonyl-CoA from acetyl-CoA: step 1/1. Its function is as follows. Component of the acetyl coenzyme A carboxylase (ACC) complex. First, biotin carboxylase catalyzes the carboxylation of biotin on its carrier protein (BCCP) and then the CO(2) group is transferred by the carboxyltransferase to acetyl-CoA to form malonyl-CoA. The chain is Acetyl-coenzyme A carboxylase carboxyl transferase subunit alpha from Paracoccus denitrificans (strain Pd 1222).